The primary structure comprises 419 residues: Peroxisome biogenesis factor 10 (419 aa).

Residues 1-27 (MPPSEEIKLRAVSPRPDFKANYLEFAN) lie on the Peroxisomal matrix side of the membrane. A helical transmembrane segment spans residues 28 to 57 (APAIVRANQKDSYFETVLRDKLQNVIQIFK). Gly-58 is a topological domain (cytoplasmic). Residues 59–80 (QRFTHTHPEEIGVAAKALYLSL) form a helical membrane-spanning segment. Residues 81–108 (TTLLGTKTLGEEYVDLIYVSRDGKRIPR) are Peroxisomal matrix-facing. The chain crosses the membrane as a helical span at residues 109-141 (YLARAGFIFAYAILPYFLTRLFRRLKSSSTPKD). Over 142–158 (EVTEEKINKELPISLRI) the chain is Cytoplasmic. The chain crosses the membrane as a helical span at residues 159–185 (EKYLSNMSYSKVLDTIMNLHIAVFYFS). The Peroxisomal matrix segment spans residues 186 to 215 (GQFYNISKRFFSMRYAFGHKINKERTPNGN). A helical membrane pass occupies residues 216–235 (YELLGGLIVLQLVMKSLGGF). Residues 236 to 419 (KGLIGSFTGN…RTLGYFLVVF (184 aa)) lie on the Cytoplasmic side of the membrane. Residues Cys-298, Cys-301, Cys-313, His-315, Cys-318, Cys-321, Cys-334, and Cys-347 each coordinate Zn(2+). Residues 298–360 (CMLCLSYMTN…FYIPTLNKIC (63 aa)) form an RING-type zinc finger.

Belongs to the pex2/pex10/pex12 family. In terms of assembly, component of the peroxisomal translocation complex, composed of at least PEX3, PEX2, PEX10 and PEX12. Interacts with PEX19.

It is found in the peroxisome membrane. The catalysed reaction is S-ubiquitinyl-[E2 ubiquitin-conjugating enzyme]-L-cysteine + [acceptor protein]-L-lysine = [E2 ubiquitin-conjugating enzyme]-L-cysteine + N(6)-ubiquitinyl-[acceptor protein]-L-lysine.. It participates in protein modification; protein ubiquitination. The E3 ubiquitin-protein ligase activity is stimulated by PEX12. In terms of biological role, E3 ubiquitin-protein ligase component of the peroxisomal translocation complex. The two types of peroxisomal matrix targeting signals, PTS1 and PTS2, are first recognized in the cytosol by their receptors PEX5 and PEX7, respectively, which then carry the cargo to the peroxisomal membrane. The peroxisomal targeting signal (PTS) receptor-cargo complexes interact with peroxisomal membrane protein (PMP) components of the docking complex. They have then additional downstream interactions with the translocation complex, leading to the transport of fully folded and oligomerized cargo into the peroxisome matrix. The peroxisomal translocation complex forms the retrotranslocation channel with each subunit contributing transmembrane segments that coassemble into an open channel that specifically allows the passage of PEX5 and PEX20 through the peroxisomal membrane. Specifically catalyzes monoubiquitination of PEX5 and/or PEX20 at 'Cys-6' and 'Cys-8', respectively, a modification that acts as a signal for PEX5 or PEX20 export from peroxisomes to the cytosol, thereby promoting PEX5 and PEX20 recycling. This chain is Peroxisome biogenesis factor 10, found in Komagataella pastoris (Yeast).